The primary structure comprises 135 residues: uncharacterized protein (135 aa).

This is an uncharacterized protein from Schizosaccharomyces pombe (strain 972 / ATCC 24843) (Fission yeast).